The following is a 243-amino-acid chain: HTH-type transcriptional regulator MlrA (243 aa).

One can recognise an HTH merR-type domain in the interval 3–72; the sequence is LYTIGEVALL…VSKVKMLLSN (70 aa). A DNA-binding region (H-T-H motif) is located at residues 6 to 25; the sequence is IGEVALLCDINPVTLRAWQR.

As to quaternary structure, interacts with DgcM and PdeR.

Activity is regulated by DgcM and PdeR. Functionally, activates transcription of csgD, the master regulator of biofilm formation, by binding to its promoter region. Also controls the transcription of cadC and ibaG. Part of a signaling cascade that regulates curli biosynthesis. The cascade is composed of two c-di-GMP control modules, in which c-di-GMP controlled by the DgcE/PdeH pair (module I) regulates the activity of the DgcM/PdeR pair (module II), which in turn regulates activity of the transcription factor MlrA. This Escherichia coli (strain K12) protein is HTH-type transcriptional regulator MlrA.